Reading from the N-terminus, the 200-residue chain is Glycerol-3-phosphate acyltransferase (200 aa).

The next 5 helical transmembrane spans lie at F2–V22, K51–A71, A84–F104, L114–V134, and L158–L178.

The protein belongs to the PlsY family. In terms of assembly, probably interacts with PlsX.

It localises to the cell inner membrane. The catalysed reaction is an acyl phosphate + sn-glycerol 3-phosphate = a 1-acyl-sn-glycero-3-phosphate + phosphate. It functions in the pathway lipid metabolism; phospholipid metabolism. Its function is as follows. Catalyzes the transfer of an acyl group from acyl-phosphate (acyl-PO(4)) to glycerol-3-phosphate (G3P) to form lysophosphatidic acid (LPA). This enzyme utilizes acyl-phosphate as fatty acyl donor, but not acyl-CoA or acyl-ACP. In Neisseria gonorrhoeae (strain ATCC 700825 / FA 1090), this protein is Glycerol-3-phosphate acyltransferase.